A 390-amino-acid chain; its full sequence is Galactokinase (390 aa).

34–37 (EHTD) is a substrate binding site. Residues S68 and 122–128 (GSGLSSS) each bind ATP. Positions 128 and 160 each coordinate Mg(2+). Catalysis depends on D172, which acts as the Proton acceptor. Y221 contributes to the substrate binding site.

The protein belongs to the GHMP kinase family. GalK subfamily.

It localises to the cytoplasm. It catalyses the reaction alpha-D-galactose + ATP = alpha-D-galactose 1-phosphate + ADP + H(+). It functions in the pathway carbohydrate metabolism; galactose metabolism. In terms of biological role, catalyzes the transfer of the gamma-phosphate of ATP to D-galactose to form alpha-D-galactose-1-phosphate (Gal-1-P). The sequence is that of Galactokinase from Chloroflexus aurantiacus (strain ATCC 29366 / DSM 635 / J-10-fl).